The sequence spans 446 residues: Probable carboxylesterase 16 (446 aa).

A disordered region spans residues 84–131; the sequence is PEPDSLRHKDNYNHQPRSDRRHSYGPNHNSPAPAERNESRRNSYGCNN. A compositionally biased stretch (basic and acidic residues) spans 87 to 105; that stretch reads DSLRHKDNYNHQPRSDRRH. Positions 158 to 160 match the Involved in the stabilization of the negatively charged intermediate by the formation of the oxyanion hole motif; it reads HGG. Catalysis depends on residues Ser-274, Asp-378, and His-408.

Belongs to the 'GDXG' lipolytic enzyme family. As to expression, expressed in roots, leaves, stems, flowers and siliques.

It carries out the reaction a carboxylic ester + H2O = an alcohol + a carboxylate + H(+). Functionally, carboxylesterase acting on esters with varying acyl chain length. This chain is Probable carboxylesterase 16 (CXE16), found in Arabidopsis thaliana (Mouse-ear cress).